The sequence spans 303 residues: Mycothiol acetyltransferase (303 aa).

2 N-acetyltransferase domains span residues 3–152 and 155–303; these read VTVT…VSLP and VRIR…MYRS. Asp35 provides a ligand contact to 1D-myo-inositol 2-(L-cysteinylamino)-2-deoxy-alpha-D-glucopyranoside. Acetyl-CoA is bound at residue 79-81; that stretch reads LTV. 1D-myo-inositol 2-(L-cysteinylamino)-2-deoxy-alpha-D-glucopyranoside contacts are provided by Glu182, Lys224, and Glu237. Residues 241 to 243 and 248 to 254 each bind acetyl-CoA; these read VGV and QGSGLGR. Residue Tyr275 coordinates 1D-myo-inositol 2-(L-cysteinylamino)-2-deoxy-alpha-D-glucopyranoside.

Belongs to the acetyltransferase family. MshD subfamily. As to quaternary structure, monomer.

It catalyses the reaction 1D-myo-inositol 2-(L-cysteinylamino)-2-deoxy-alpha-D-glucopyranoside + acetyl-CoA = mycothiol + CoA + H(+). Its function is as follows. Catalyzes the transfer of acetyl from acetyl-CoA to desacetylmycothiol (Cys-GlcN-Ins) to form mycothiol. In Kocuria rhizophila (strain ATCC 9341 / DSM 348 / NBRC 103217 / DC2201), this protein is Mycothiol acetyltransferase.